Here is an 89-residue protein sequence, read N- to C-terminus: Small ribosomal subunit protein uS15 (89 aa).

Basic and acidic residues predominate over residues 1-16 (MSVADIKKQDIVKDNG). The segment at 1-24 (MSVADIKKQDIVKDNGRSANDTGS) is disordered.

It belongs to the universal ribosomal protein uS15 family. Part of the 30S ribosomal subunit. Forms a bridge to the 50S subunit in the 70S ribosome, contacting the 23S rRNA.

In terms of biological role, one of the primary rRNA binding proteins, it binds directly to 16S rRNA where it helps nucleate assembly of the platform of the 30S subunit by binding and bridging several RNA helices of the 16S rRNA. Its function is as follows. Forms an intersubunit bridge (bridge B4) with the 23S rRNA of the 50S subunit in the ribosome. The sequence is that of Small ribosomal subunit protein uS15 from Ralstonia pickettii (strain 12J).